Here is a 358-residue protein sequence, read N- to C-terminus: Nicotinate-nucleotide--dimethylbenzimidazole phosphoribosyltransferase (358 aa).

The Proton acceptor role is filled by glutamate 313.

This sequence belongs to the CobT family.

It catalyses the reaction 5,6-dimethylbenzimidazole + nicotinate beta-D-ribonucleotide = alpha-ribazole 5'-phosphate + nicotinate + H(+). Its pathway is nucleoside biosynthesis; alpha-ribazole biosynthesis; alpha-ribazole from 5,6-dimethylbenzimidazole: step 1/2. Catalyzes the synthesis of alpha-ribazole-5'-phosphate from nicotinate mononucleotide (NAMN) and 5,6-dimethylbenzimidazole (DMB). This is Nicotinate-nucleotide--dimethylbenzimidazole phosphoribosyltransferase from Corynebacterium glutamicum (strain ATCC 13032 / DSM 20300 / JCM 1318 / BCRC 11384 / CCUG 27702 / LMG 3730 / NBRC 12168 / NCIMB 10025 / NRRL B-2784 / 534).